Consider the following 126-residue polypeptide: MHLSQLLACALLLTLLSLRPSEAKPGAPPKVPRTPPGEEVAEPQAAGGGQKKGDKTPGGGGANLKGDRSRLLRDLRVDTKSRAAWARLLHEHPNARKYKGGNKKGLSKGCFGLKLDRIGSMSGLGC.

An N-terminal signal peptide occupies residues 1–23; the sequence is MHLSQLLACALLLTLLSLRPSEA. Positions 19–72 are disordered; that stretch reads RPSEAKPGAPPKVPRTPPGEEVAEPQAAGGGQKKGDKTPGGGGANLKGDRSRLL. A propeptide spanning residues 24–73 is cleaved from the precursor; sequence KPGAPPKVPRTPPGEEVAEPQAAGGGQKKGDKTPGGGGANLKGDRSRLLR. The segment covering 26 to 35 has biased composition (pro residues); it reads GAPPKVPRTP. The segment covering 46–63 has biased composition (gly residues); the sequence is AGGGQKKGDKTPGGGGAN. Cys110 and Cys126 are oxidised to a cystine.

The protein belongs to the natriuretic peptide family. In terms of processing, degraded by IDE (in vitro).

The protein localises to the secreted. Functionally, hormone which plays a role in endochondral ossification through regulation of cartilaginous growth plate chondrocytes proliferation and differentiation. May also be vasoactive and natriuretic. Acts by specifically binding and stimulating NPR2 to produce cGMP. Binds the clearance receptor NPR3. The chain is C-type natriuretic peptide (NPPC) from Sus scrofa (Pig).